The chain runs to 734 residues: Photosystem I P700 chlorophyll a apoprotein A2 (734 aa).

The next 8 membrane-spanning stretches (helical) occupy residues 46–69, 135–158, 175–199, 273–291, 330–353, 369–395, 417–439, and 517–535; these read IFAS…FHVA, LYTG…LHLQ, LNHH…HVAI, IAHH…GHMY, IHFQ…QHMY, AALY…IFFI, AIIS…LYVH, and FLVH…LILV. Residues cysteine 559 and cysteine 568 each contribute to the [4Fe-4S] cluster site. The next 2 helical transmembrane spans lie at 575-596 and 643-665; these read AFYL…YWHW and LSVW…MFLI. Chlorophyll a is bound by residues histidine 654, methionine 662, and tyrosine 670. Phylloquinone is bound at residue tryptophan 671. Residues 707-727 traverse the membrane as a helical segment; it reads LVGLAHFSVGYIFTYAAFLIA.

This sequence belongs to the PsaA/PsaB family. As to quaternary structure, the PsaA/B heterodimer binds the P700 chlorophyll special pair and subsequent electron acceptors. PSI consists of a core antenna complex that captures photons, and an electron transfer chain that converts photonic excitation into a charge separation. The eukaryotic PSI reaction center is composed of at least 11 subunits. P700 is a chlorophyll a/chlorophyll a' dimer, A0 is one or more chlorophyll a, A1 is one or both phylloquinones and FX is a shared 4Fe-4S iron-sulfur center. serves as cofactor.

The protein resides in the plastid. Its subcellular location is the chloroplast thylakoid membrane. The enzyme catalyses reduced [plastocyanin] + hnu + oxidized [2Fe-2S]-[ferredoxin] = oxidized [plastocyanin] + reduced [2Fe-2S]-[ferredoxin]. Functionally, psaA and PsaB bind P700, the primary electron donor of photosystem I (PSI), as well as the electron acceptors A0, A1 and FX. PSI is a plastocyanin-ferredoxin oxidoreductase, converting photonic excitation into a charge separation, which transfers an electron from the donor P700 chlorophyll pair to the spectroscopically characterized acceptors A0, A1, FX, FA and FB in turn. Oxidized P700 is reduced on the lumenal side of the thylakoid membrane by plastocyanin. In Aethionema grandiflorum (Persian stone-cress), this protein is Photosystem I P700 chlorophyll a apoprotein A2.